We begin with the raw amino-acid sequence, 123 residues long: PCNA-associated factor (123 aa).

The tract at residues 1 to 123 (MVRTKADCAG…SEEAADSGDE (123 aa)) is disordered. Residues 26-37 (RKTFGSSSSGSN) carry the D-box motif. A PIP-box motif is present at residues 66–77 (QKGIGDFFGSPS). The short motif at 83 to 85 (KEN) is the KEN box element. The Initiation motif signature appears at 93 to 105 (EAGGSGAGKKPRK). Residues 113–123 (PSEEAADSGDE) are compositionally biased toward acidic residues.

In terms of assembly, interacts with pcna.

It is found in the nucleus. The protein resides in the cytoplasm. The protein localises to the perinuclear region. PCNA-binding protein that acts as a regulator of DNA repair during DNA replication. Following DNA damage, the interaction with pcna is disrupted, facilitating the interaction between monoubiquitinated pcna and the translesion DNA synthesis DNA polymerase eta (polh) at stalled replisomes, facilitating the bypass of replication-fork-blocking lesions. Also acts as a regulator of centrosome number. The protein is PCNA-associated factor of Xenopus laevis (African clawed frog).